The sequence spans 405 residues: Replication factor C large subunit (405 aa).

47-54 (GPPGVGKT) provides a ligand contact to ATP.

The protein belongs to the activator 1 small subunits family. RfcL subfamily. In terms of assembly, heteromultimer composed of small subunits (RfcS) and large subunits (RfcL).

Its function is as follows. Part of the RFC clamp loader complex which loads the PCNA sliding clamp onto DNA. The polypeptide is Replication factor C large subunit (Saccharolobus islandicus (strain Y.N.15.51 / Yellowstone #2) (Sulfolobus islandicus)).